A 466-amino-acid chain; its full sequence is 55 kDa erythrocyte membrane protein (466 aa).

At T2 the chain carries N-acetylthreonine. S13 and S19 each carry phosphoserine. A Phosphothreonine modification is found at T49. 3 positions are modified to phosphoserine: S52, S57, and S110. The PDZ domain occupies 71 to 152 (LIQFEKVTEE…MISLKVIPNQ (82 aa)). The 71-residue stretch at 158 to 228 (ALQMFMRAQF…PSPELQEWRV (71 aa)) folds into the SH3 domain. A Phosphoserine modification is found at S243. The interaction with PALS1 stretch occupies residues 268-466 (VVSYEEVVRL…PQWVPVSWVY (199 aa)). The Guanylate kinase-like domain maps to 282-451 (RKTLVLIGAS…TLKKLQEAFD (170 aa)).

The protein belongs to the MAGUK family. In terms of assembly, heterodimer with PALS1. Interacts with DLG5 and NF2. Interacts (via guanylate kinase-like domain) with WHRN (via third PDZ domain). Palmitoylated.

It localises to the cell membrane. Its subcellular location is the cell projection. The protein localises to the stereocilium. Its function is as follows. Essential regulator of neutrophil polarity. Regulates neutrophil polarization by regulating AKT1 phosphorylation through a mechanism that is independent of PIK3CG activity. The sequence is that of 55 kDa erythrocyte membrane protein (MPP1) from Pongo abelii (Sumatran orangutan).